We begin with the raw amino-acid sequence, 417 residues long: Gamma-glutamyl phosphate reductase (417 aa).

It belongs to the gamma-glutamyl phosphate reductase family.

It is found in the cytoplasm. The enzyme catalyses L-glutamate 5-semialdehyde + phosphate + NADP(+) = L-glutamyl 5-phosphate + NADPH + H(+). The protein operates within amino-acid biosynthesis; L-proline biosynthesis; L-glutamate 5-semialdehyde from L-glutamate: step 2/2. Catalyzes the NADPH-dependent reduction of L-glutamate 5-phosphate into L-glutamate 5-semialdehyde and phosphate. The product spontaneously undergoes cyclization to form 1-pyrroline-5-carboxylate. The polypeptide is Gamma-glutamyl phosphate reductase (Shigella boydii serotype 18 (strain CDC 3083-94 / BS512)).